Consider the following 99-residue polypeptide: DNA-binding protein Fis (99 aa).

Residues 75-94 constitute a DNA-binding region (H-T-H motif); the sequence is QTRAALMLGVNRGTLRKKLK.

This sequence belongs to the transcriptional regulatory Fis family. Homodimer.

Activates ribosomal RNA transcription. Plays a direct role in upstream activation of rRNA promoters. The sequence is that of DNA-binding protein Fis from Actinobacillus succinogenes (strain ATCC 55618 / DSM 22257 / CCUG 43843 / 130Z).